An 873-amino-acid polypeptide reads, in one-letter code: Leucine--tRNA ligase (873 aa).

The 'HIGH' region motif lies at 41–51 (PYPSGRIHMGH). The 'KMSKS' region motif lies at 645–649 (KMSKS). Position 648 (K648) interacts with ATP.

The protein belongs to the class-I aminoacyl-tRNA synthetase family.

The protein resides in the cytoplasm. The catalysed reaction is tRNA(Leu) + L-leucine + ATP = L-leucyl-tRNA(Leu) + AMP + diphosphate. The protein is Leucine--tRNA ligase of Cereibacter sphaeroides (strain ATCC 17025 / ATH 2.4.3) (Rhodobacter sphaeroides).